The following is a 558-amino-acid chain: Atlastin-1 (558 aa).

Residues 1 to 28 form a disordered region; the sequence is MAKSRRDRNSWGGFSEKSSDWSSEEEEP. Residues 1 to 34 form an N-terminal hypervariable region (HVR) region; sequence MAKSRRDRNSWGGFSEKSSDWSSEEEEPVRKAGP. Residues 1 to 449 lie on the Cytoplasmic side of the membrane; it reads MAKSRRDRNS…NIFHAARTPA (449 aa). Phosphoserine occurs at positions 10, 22, and 23. One can recognise a GB1/RHD3-type G domain in the interval 64–309; the sequence is DKEVVAVSVA…LIPWLLSPER (246 aa). Residues arginine 77, lysine 78, glycine 79, lysine 80, serine 81, phenylalanine 82, glutamine 148, arginine 217, aspartate 218, valine 276, and asparagine 279 each contribute to the GDP site. GTP contacts are provided by arginine 77, lysine 78, glycine 79, lysine 80, serine 81, and phenylalanine 82. Serine 81 is a Mg(2+) binding site. The GTP site is built by arginine 217, aspartate 218, and valine 276. The interval 347–438 is 3HB (three-helix bundle) domain; that stretch reads MLQATAEANN…YIQYIKHNDS (92 aa). Residue lysine 395 is modified to N6-acetyllysine. A coiled-coil region spans residues 412–439; that stretch reads EFSRRYLQQLESEIDELYIQYIKHNDSK. The interval 439-447 is linker; sequence KNIFHAART. Residues 450-470 form a helical membrane-spanning segment; that stretch reads TLFVVIFITYVIAGVTGFIGL. Aspartate 471 is a topological domain (lumenal). Residues 472–492 form a helical membrane-spanning segment; the sequence is IIASLCNMIMGLTLITLCTWA. The Cytoplasmic portion of the chain corresponds to 493-558; the sequence is YIRYSGEYRE…PTQQPEKKKI (66 aa). The interval 521 to 558 is autoinhibitory domain; sequence NEALYKLYSAAATHRHLCHQAFPAPKSEPTQQPEKKKI.

The protein belongs to the TRAFAC class dynamin-like GTPase superfamily. GB1/RHD3 GTPase family. GB1 subfamily. Monomeric and homodimeric. The homodimer, transiently formed by two molecules on opposing membranes, is the active form mediating ER membrane fusion. Interacts with REEP1, REEP5, RTN3 and RTN4 (via the transmembrane region); these proteins are involved in endoplasmic reticulum tubular network organization. Interacts with ZFYVE27; both proteins are involved in endoplasmic reticulum tubular network organization. Interacts with ARL6IP1; both proteins are involved in endoplasmic reticulum tubular network organization. Interacts with SPAST; the interaction is direct, could recruit SPAST to Golgi membranes. Interacts (via N-terminal region) with MAP4K4 (via CNH regulatory domain). May interact with TMED2. Interacts with CPT1C. Post-translationally, phosphorylated. Phosphorylation, by different kinases, of the N-terminal hypervariable region (HVR) regulates the ATL1-mediated membrane tethering step.

Its subcellular location is the endoplasmic reticulum membrane. It localises to the golgi apparatus membrane. The protein localises to the cell projection. The protein resides in the axon. It carries out the reaction GTP + H2O = GDP + phosphate + H(+). Its function is as follows. Atlastin-1 (ATL1) is a membrane-anchored GTPase that mediates the GTP-dependent fusion of endoplasmic reticulum (ER) membranes, maintaining the continuous ER network. It facilitates the formation of three-way junctions where ER tubules intersect. Two atlastin-1 on neighboring ER tubules bind GTP and form loose homodimers through the GB1/RHD3-type G domains and 3HB regions. Upon GTP hydrolysis, the 3HB regions tighten, pulling the membranes together to drive their fusion. After fusion, the homodimer disassembles upon release of inorganic phosphate (Pi). Subsequently, GDP dissociates, resetting the monomers to a conformation ready for a new fusion cycle. May also regulate more or less directly Golgi biogenesis. Indirectly regulates axonal development. This chain is Atlastin-1, found in Mus musculus (Mouse).